Reading from the N-terminus, the 204-residue chain is MNDVKLTVLGGEGTGKSALIVRFLTKRFIGEYASNFESIYNKHLCLEGKQLNLEIYDPCSQPQKAKFSLTSELHWADGFVIVYDISDRSSFAFAKALIYRIREPQTSHCKRPVESAVLLVGNKQDLCHVREVGWEEGHKLALDNRCQFCELSAAEQSLEVEMMFIRIIRDILTNFKLKEKRRYSGSKSMAKLINNVFGKRRKSV.

Residues Met1–Val204 form a small GTPase-like region. Residues Gly10–Ser17, Asp57–Gln63, and Asn122–Asp125 contribute to the GTP site.

This sequence belongs to the small GTPase superfamily. Ras family.

The catalysed reaction is GTP + H2O = GDP + phosphate + H(+). Functionally, binds GDP/GTP and may possess intrinsic GTPase activity. This chain is Ras-related and estrogen-regulated growth inhibitor-like protein (RERGL), found in Bos taurus (Bovine).